A 305-amino-acid chain; its full sequence is 4-diphosphocytidyl-2-C-methyl-D-erythritol kinase (305 aa).

K10 is a catalytic residue. 95–105 lines the ATP pocket; the sequence is PVTAGLGGGSS. Residue D136 is part of the active site. A disordered region spans residues 286 to 305; it reads PGVTPWRSPRSASSPSTKRS. The segment covering 290–305 has biased composition (low complexity); it reads PWRSPRSASSPSTKRS.

This sequence belongs to the GHMP kinase family. IspE subfamily.

It carries out the reaction 4-CDP-2-C-methyl-D-erythritol + ATP = 4-CDP-2-C-methyl-D-erythritol 2-phosphate + ADP + H(+). The protein operates within isoprenoid biosynthesis; isopentenyl diphosphate biosynthesis via DXP pathway; isopentenyl diphosphate from 1-deoxy-D-xylulose 5-phosphate: step 3/6. In terms of biological role, catalyzes the phosphorylation of the position 2 hydroxy group of 4-diphosphocytidyl-2C-methyl-D-erythritol. The polypeptide is 4-diphosphocytidyl-2-C-methyl-D-erythritol kinase (Anaeromyxobacter sp. (strain Fw109-5)).